A 281-amino-acid polypeptide reads, in one-letter code: MSSYQDHKALAELTLGKPTAYCDHYDVTLLQAVPRSMNREPLGLYPDNLPFHGADIWTLYELSWLNSKGLPQVAIGEISLNADSVNLIESKSFKLYLNSFNQTVFTDWESVRTTLQQDLSACAQGEVSITLYRLDEMTHQPIANFSGECLDEQDLYIDSYEFNADYLQGAAGKNRVTESLVSHLLKSNCLITHQPDWGSVQISYSGPQINREALLRYLISFRHHNEFHEQCVERIFNDIMRFCQPETLSVYARYTRRGGLDINPWRSNTDFVPLTGRLARQ.

88-90 is a substrate binding site; the sequence is IES. 90-91 is an NADPH binding site; it reads SK. Catalysis depends on Cys189, which acts as the Thioimide intermediate. Asp196 functions as the Proton donor in the catalytic mechanism. 228 to 229 contacts substrate; the sequence is HE. 257–258 provides a ligand contact to NADPH; sequence RG.

This sequence belongs to the GTP cyclohydrolase I family. QueF type 2 subfamily. As to quaternary structure, homodimer.

Its subcellular location is the cytoplasm. The catalysed reaction is 7-aminomethyl-7-carbaguanine + 2 NADP(+) = 7-cyano-7-deazaguanine + 2 NADPH + 3 H(+). It functions in the pathway tRNA modification; tRNA-queuosine biosynthesis. Functionally, catalyzes the NADPH-dependent reduction of 7-cyano-7-deazaguanine (preQ0) to 7-aminomethyl-7-deazaguanine (preQ1). This is NADPH-dependent 7-cyano-7-deazaguanine reductase from Yersinia enterocolitica serotype O:8 / biotype 1B (strain NCTC 13174 / 8081).